Here is a 383-residue protein sequence, read N- to C-terminus: 8-amino-7-oxononanoate synthase (383 aa).

Arg-21 serves as a coordination point for substrate. Pyridoxal 5'-phosphate is bound at residue 108–109 (GY). His-133 serves as a coordination point for substrate. Pyridoxal 5'-phosphate-binding residues include Ser-179, His-207, and Thr-233. At Lys-236 the chain carries N6-(pyridoxal phosphate)lysine. Thr-350 contacts substrate.

This sequence belongs to the class-II pyridoxal-phosphate-dependent aminotransferase family. BioF subfamily. Homodimer. Requires pyridoxal 5'-phosphate as cofactor.

The enzyme catalyses 6-carboxyhexanoyl-[ACP] + L-alanine + H(+) = (8S)-8-amino-7-oxononanoate + holo-[ACP] + CO2. Its pathway is cofactor biosynthesis; biotin biosynthesis. Catalyzes the decarboxylative condensation of pimeloyl-[acyl-carrier protein] and L-alanine to produce 8-amino-7-oxononanoate (AON), [acyl-carrier protein], and carbon dioxide. The chain is 8-amino-7-oxononanoate synthase from Serratia proteamaculans (strain 568).